The sequence spans 110 residues: Defensin-like protein 296 (110 aa).

An N-terminal signal peptide occupies residues 1-28; it reads MASKITIFFVLALVVVCTMMVCIPTATA. Disulfide bonds link cysteine 34-cysteine 52, cysteine 40-cysteine 57, cysteine 45-cysteine 59, cysteine 81-cysteine 102, cysteine 87-cysteine 107, and cysteine 95-cysteine 109.

It belongs to the DEFL family.

It localises to the secreted. The sequence is that of Defensin-like protein 296 from Arabidopsis thaliana (Mouse-ear cress).